The following is a 711-amino-acid chain: MLDGPLFSEGPDSPRELQDEESGSCLWVQKSKLLVIEVKTISCHYSRRAPSRQPMDFQASHWARGFQNRTCGPRPGSPQPPPRRPWASRVLQEATNWRAGPLAEVRAREQEKRKAASQEREAKETERKRRKAGGARRSPPGRPRPEPRNAPRVAQLAGLPAPLRPERLAPVGRAPRPSAQPQSDPGSAWAGPWGGRRPGPPSYEAHLLLRGSAGTAPRRRWDRPPPYVAPPSYEGPHRTLGTKRGPGNSQVPTSSAPAATPARTDGGRTKKRLDPRIYRDVLGAWGLRQGQGLLGGSPGCGAARARPEPGKGVVEKSLGLAAADLNSGSDSHPQAKATGSAGTEIAPAGSATAAPCAPHPAPRSRHHLKGSREGKEGEQIWFPKCWIPSPKKQPPRHSQTLPRPWAPGGTGWRESLGLGEGAGPETLEGWKATRRAHTLPRSSQGLSRGEGVFVIDATCVVIRSQYVPTPRTQQVQLLPSGVTRVVGDSPSQSKPGKEEGEGATVFPSPCQKRLSSSRLLHQPGGGRGGEAEGGRPGDSTLEERTFRILGLPAPEVNLRDAPTQPGSPEHQALGPAASGAQGRAEGSEVAVVQRRAGRGWARTPGPYAGALREAVSRIRRHTAPDSDTDEAEELSVHSGSSDGSDTEAPGASWRNERTLPEVGNSSPEEDGKTAELSDSVGEILDVISQTEEVLFGVRDIRGTQQGNRKRQ.

Disordered stretches follow at residues 1-22 (MLDG…DEES), 49-273 (APSR…KKRL), 324-446 (DLNS…SQGL), and 479-677 (PSGV…AELS). Residues 75 to 84 (PGSPQPPPRR) are compositionally biased toward pro residues. Residues 102–134 (LAEVRAREQEKRKAASQEREAKETERKRRKAGG) are a coiled coil. Residues 105–127 (VRAREQEKRKAASQEREAKETER) show a composition bias toward basic and acidic residues. The segment at 113-131 (RKAASQEREAKETERKRRK) is nuclear localization. Low complexity predominate over residues 150 to 161 (APRVAQLAGLPA). An interaction with MAGI2 region spans residues 186 to 236 (GSAWAGPWGGRRPGPPSYEAHLLLRGSAGTAPRRRWDRPPPYVAPPSYEGP). 2 stretches are compositionally biased toward low complexity: residues 252–262 (PTSSAPAATPA) and 346–356 (APAGSATAAPC). Residues 341 to 436 (AGTEIAPAGS…LEGWKATRRA (96 aa)) form an interaction with ACTN1 region. The residue at position 389 (Ser-389) is a Phosphoserine. The interval 408-709 (GGTGWRESLG…IRGTQQGNRK (302 aa)) is interaction with CD2AP and NPHS1. The span at 529-546 (GEAEGGRPGDSTLEERTF) shows a compositional bias: basic and acidic residues.

Forms a ternary complex with MAGI2 and SH3KBP1; recruits DDN to the cytoplasm. Interacts with MAGI1. Interacts with ACTN1 and may interact with WWC1. Interacts with the podocyte slit diaphragm proteins CD2AP, NPHS1 and NPHS2; the interaction with CD2AP and NPHS1 is direct. As to expression, specifically expressed in brain and kidney. Expressed in kidney glomerular capillary loops (at protein level).

It is found in the cell projection. The protein resides in the dendritic spine membrane. The protein localises to the cytoplasm. Its subcellular location is the endoplasmic reticulum membrane. It localises to the perikaryon. It is found in the nucleus. In terms of biological role, promotes apoptosis of kidney glomerular podocytes. Podocytes are highly specialized cells essential to the ultrafiltration of blood, resulting in the extraction of urine and the retention of protein. The sequence is that of Dendrin (DDN) from Homo sapiens (Human).